We begin with the raw amino-acid sequence, 429 residues long: MKERTIQPVNNGLNGNITIPGDKSISHRAVMFGAIAEGTTTIKGFLPGADCLSTISCFKEMGVDIVQNGDEVTVVGKGLEGLQEPKAVLDVGNSGTTIRLMSGILANTPFLSCVQGDTSIAKRPMKRVTNPLKQMGANIDGREEGTFTPLTIRGGDLKAIEYTSPVASAQVKSAILLAGLRAEGVTAVTEPHISRDHTERMLEAFGVKVTREGKTVKLAGGQKLTATDVQVPGDVSSAAFFLVAGAIIPNSKLVLENVGMNPTRTGIIDVLEKMGATFTVEPINEGASEPAANITIETSSLKGIEIGGDIIPRLIDEIPVIALAATQAEGITVIKDAHELKVKETNRIDTVVAELTKLGARIEATDDRMIIYGKSALKGNTVNSYGDHRIGMMLAIAGCIAEGKTIIEDAEAVGVSYPTFFEELQKLAK.

3-phosphoshikimate is bound by residues lysine 23, serine 24, and arginine 28. Lysine 23 contacts phosphoenolpyruvate. Phosphoenolpyruvate contacts are provided by glycine 95 and arginine 123. 3-phosphoshikimate contacts are provided by serine 168, glutamine 170, aspartate 316, and lysine 343. Glutamine 170 provides a ligand contact to phosphoenolpyruvate. Aspartate 316 (proton acceptor) is an active-site residue. Arginine 347 and arginine 389 together coordinate phosphoenolpyruvate.

It belongs to the EPSP synthase family. As to quaternary structure, monomer.

The protein resides in the cytoplasm. It carries out the reaction 3-phosphoshikimate + phosphoenolpyruvate = 5-O-(1-carboxyvinyl)-3-phosphoshikimate + phosphate. Its pathway is metabolic intermediate biosynthesis; chorismate biosynthesis; chorismate from D-erythrose 4-phosphate and phosphoenolpyruvate: step 6/7. Catalyzes the transfer of the enolpyruvyl moiety of phosphoenolpyruvate (PEP) to the 5-hydroxyl of shikimate-3-phosphate (S3P) to produce enolpyruvyl shikimate-3-phosphate and inorganic phosphate. The chain is 3-phosphoshikimate 1-carboxyvinyltransferase from Bacillus anthracis (strain A0248).